A 283-amino-acid polypeptide reads, in one-letter code: Phosphatidylserine decarboxylase proenzyme (283 aa).

Residues Asp96, His152, and Ser250 each act as charge relay system; for autoendoproteolytic cleavage activity in the active site. The active-site Schiff-base intermediate with substrate; via pyruvic acid; for decarboxylase activity is Ser250. Ser250 carries the pyruvic acid (Ser); by autocatalysis modification.

Belongs to the phosphatidylserine decarboxylase family. PSD-B subfamily. Prokaryotic type I sub-subfamily. As to quaternary structure, heterodimer of a large membrane-associated beta subunit and a small pyruvoyl-containing alpha subunit. Pyruvate serves as cofactor. Post-translationally, is synthesized initially as an inactive proenzyme. Formation of the active enzyme involves a self-maturation process in which the active site pyruvoyl group is generated from an internal serine residue via an autocatalytic post-translational modification. Two non-identical subunits are generated from the proenzyme in this reaction, and the pyruvate is formed at the N-terminus of the alpha chain, which is derived from the carboxyl end of the proenzyme. The autoendoproteolytic cleavage occurs by a canonical serine protease mechanism, in which the side chain hydroxyl group of the serine supplies its oxygen atom to form the C-terminus of the beta chain, while the remainder of the serine residue undergoes an oxidative deamination to produce ammonia and the pyruvoyl prosthetic group on the alpha chain. During this reaction, the Ser that is part of the protease active site of the proenzyme becomes the pyruvoyl prosthetic group, which constitutes an essential element of the active site of the mature decarboxylase.

It localises to the cell membrane. It catalyses the reaction a 1,2-diacyl-sn-glycero-3-phospho-L-serine + H(+) = a 1,2-diacyl-sn-glycero-3-phosphoethanolamine + CO2. The protein operates within phospholipid metabolism; phosphatidylethanolamine biosynthesis; phosphatidylethanolamine from CDP-diacylglycerol: step 2/2. Functionally, catalyzes the formation of phosphatidylethanolamine (PtdEtn) from phosphatidylserine (PtdSer). This Acinetobacter baumannii (strain ATCC 17978 / DSM 105126 / CIP 53.77 / LMG 1025 / NCDC KC755 / 5377) protein is Phosphatidylserine decarboxylase proenzyme.